The chain runs to 228 residues: Hematopoietically-expressed homeobox protein hhex (228 aa).

A DNA-binding region (homeobox) is located at residues arginine 117–lysine 176. The tract at residues leucine 175–leucine 228 is disordered. Over residues glycine 184–glutamate 207 the composition is skewed to basic and acidic residues. Residues aspartate 213 to aspartate 222 are compositionally biased toward acidic residues.

In terms of tissue distribution, expressed in embryonic endothelial and blood lineages. From late-blastula stage, expression is restricted to the dorsal marginal region of the extraembryonic yolk syncytial layer (YSL). By the onset of gastrulation, expressed in the entire dorsal half of the YSL. Post-gastrulation, expression appears in both anterior and posterior lateral plate mesoderm by the 3-somite stage. Posteriorly, expression is in the intermediate cell mass (ICM), which contains both endothelial and blood precursors. Subsequently expressed in the developing endothelial cells including the endocardium until the onset of circulation (24 hpf) and disappears completely by 30 hpf, at which point expression is seen in the thyroid and liver primordia. Also expressed in the developing biliary tree and pancreas.

It is found in the nucleus. Recognizes the DNA sequence 5'-ATTAA-3'. Transcriptional repressor. Regulates the differentiation of both endothelial and blood cells. Plays a role in embryonic dorsoventral patterning by regulating bmp expression. May establish anterior identity. Functions in the embryo to regulate liver development. Functions extraembryonically to generate organ chirality. The protein is Hematopoietically-expressed homeobox protein hhex of Danio rerio (Zebrafish).